The following is a 72-amino-acid chain: Defensin-like protein 35 (72 aa).

The first 22 residues, Met1–Ala22, serve as a signal peptide directing secretion. 3 disulfides stabilise this stretch: Cys32-Cys58, Cys44-Cys67, and Cys48-Cys69.

The protein belongs to the DEFL family.

It is found in the secreted. In Arabidopsis thaliana (Mouse-ear cress), this protein is Defensin-like protein 35.